We begin with the raw amino-acid sequence, 284 residues long: Isopentenyl-diphosphate delta-isomerase (284 aa).

Residue lysine 77 coordinates substrate. Mg(2+) contacts are provided by histidine 81 and histidine 92. Residues 90–256 (LLHRAFSVFL…SLVFTPWFKL (167 aa)) enclose the Nudix hydrolase domain. Substrate is bound by residues arginine 111 and lysine 115. The active site involves cysteine 127. Serine 128 contributes to the substrate binding site. The Nudix box signature appears at 128–172 (SHPLCVPSELGVDSSLEGSKDVNNLTNAVKGAKVAAQRKLEHELG). Mg(2+)-binding residues include glutamate 204 and glutamate 206. Glutamate 206 is a catalytic residue.

It belongs to the IPP isomerase type 1 family. The cofactor is Mg(2+).

It localises to the cytoplasm. It catalyses the reaction isopentenyl diphosphate = dimethylallyl diphosphate. Its pathway is isoprenoid biosynthesis; dimethylallyl diphosphate biosynthesis; dimethylallyl diphosphate from isopentenyl diphosphate: step 1/1. Its function is as follows. Isopentenyl-diphosphate delta-isomerase; part of the second module of ergosterol biosynthesis pathway that includes the middle steps of the pathway. IDI1 catalyzes the 1,3-allylic rearrangement of isopentenyl (IPP) to its highly electrophilic allylic isomer, dimethylallyl diphosphate (DMAPP). The second module is carried out in the vacuole and involves the formation of farnesyl diphosphate, which is also an important intermediate in the biosynthesis of ubiquinone, dolichol, heme and prenylated proteins. Activity by the mevalonate kinase ERG12 first converts mevalonate into 5-phosphomevalonate. 5-phosphomevalonate is then further converted to 5-diphosphomevalonate by the phosphomevalonate kinase ERG8. The diphosphomevalonate decarboxylase MVD then produces isopentenyl diphosphate. The isopentenyl-diphosphate delta-isomerase IDI1 then catalyzes the 1,3-allylic rearrangement of the homoallylic substrate isopentenyl (IPP) to its highly electrophilic allylic isomer, dimethylallyl diphosphate (DMAPP). Finally the farnesyl diphosphate synthase ERG20 catalyzes the sequential condensation of isopentenyl pyrophosphate with dimethylallyl pyrophosphate, and then with the resultant geranylpyrophosphate to the ultimate product farnesyl pyrophosphate. The chain is Isopentenyl-diphosphate delta-isomerase from Candida albicans (strain SC5314 / ATCC MYA-2876) (Yeast).